The chain runs to 430 residues: Probable FAD-dependent monooxygenase (430 aa).

An N-terminal signal peptide occupies residues 1 to 23 (MGSTSTPPHVLIIGAGITGLALA). 9–37 (HVLIIGAGITGLALAQALRKHGVSFAVYE) contributes to the FAD binding site. Residues Asn-130 and Asn-151 are each glycosylated (N-linked (GlcNAc...) asparagine). 307 to 330 (LEDWPTPPKGSWSNLGGTATLVGD) lines the FAD pocket.

Requires FAD as cofactor.

This is Probable FAD-dependent monooxygenase from Arthroderma benhamiae (strain ATCC MYA-4681 / CBS 112371) (Trichophyton mentagrophytes).